The primary structure comprises 845 residues: Matrin-3 (845 aa).

Position 2 is an N-acetylserine (Ser2). At Lys3 the chain carries N6-acetyllysine; alternate. Residue Lys3 forms a Glycyl lysine isopeptide (Lys-Gly) (interchain with G-Cter in SUMO2); alternate linkage. 7 positions are modified to phosphoserine: Ser4, Ser9, Ser14, Ser22, Ser41, Ser118, and Ser126. Glycyl lysine isopeptide (Lys-Gly) (interchain with G-Cter in SUMO2) cross-links involve residues Lys132 and Lys146. 2 disordered regions span residues 147 to 174 (RRRT…YRVP) and 187 to 213 (DSFD…ESGY). A Phosphothreonine modification is found at Thr150. Ser157 carries the phosphoserine modification. Tyr158 bears the Phosphotyrosine mark. Basic and acidic residues predominate over residues 160-174 (RDGRSATREPPYRVP). Ser164, Ser188, and Ser195 each carry phosphoserine. The span at 201-213 (DYDHGSRSQESGY) shows a compositional bias: basic and acidic residues. Tyr202 is subject to Phosphotyrosine. Phosphoserine is present on residues Ser206, Ser208, and Ser211. A Phosphotyrosine modification is found at Tyr219. The residue at position 234 (Ser234) is a Phosphoserine. Lys245 participates in a covalent cross-link: Glycyl lysine isopeptide (Lys-Gly) (interchain with G-Cter in SUMO2). Residue Ser264 is modified to Phosphoserine. Lys269 participates in a covalent cross-link: Glycyl lysine isopeptide (Lys-Gly) (interchain with G-Cter in SUMO2). Ser275 is modified (phosphoserine). The interval 342–394 (PFMLQQSTNPAPGILGPPPPSFHLGGPAVGPRGNLGAGNGNLQGPRHMQKGRV) is disordered. Residues 398–473 (RVVHIMDFQR…KPVRVHLSQK (76 aa)) form the RRM 1 domain. Residues Lys478, Lys487, and Lys491 each participate in a glycyl lysine isopeptide (Lys-Gly) (interchain with G-Cter in SUMO2) cross-link. An RRM 2 domain is found at 496–571 (RVIHLSNLPH…RCVKVDLSEK (76 aa)). Residues Ser509 and Ser511 each carry the phosphoserine modification. A Glycyl lysine isopeptide (Lys-Gly) (interchain with G-Cter in SUMO2) cross-link involves residue Lys515. Lys522 is subject to N6-acetyllysine; alternate. A Glycyl lysine isopeptide (Lys-Gly) (interchain with G-Cter in SUMO2); alternate cross-link involves residue Lys522. Phosphoserine is present on Ser533. Residues Lys554 and Lys555 each participate in a glycyl lysine isopeptide (Lys-Gly) (interchain with G-Cter in SUMO2) cross-link. At Lys571 the chain carries N6-acetyllysine. The disordered stretch occupies residues 588–785 (KKDKSRKRSY…EYRIGPYQPN (198 aa)). Phosphoserine is present on residues Ser596, Ser598, Ser604, and Ser606. Residues 600-643 (DGKESPSDKKSKTDGAQKTENPAEGKEQEEKSGEDGEKDTKDDQ) are compositionally biased toward basic and acidic residues. Glycyl lysine isopeptide (Lys-Gly) (interchain with G-Cter in SUMO2) cross-links involve residues Lys617 and Lys630. The segment covering 653 to 665 (ESEDELLVDEEEA) has biased composition (acidic residues). 4 positions are modified to phosphoserine: Ser654, Ser671, Ser673, and Ser674. The residue at position 679 (Thr679) is a Phosphothreonine. Position 689 is a phosphoserine (Ser689). The segment covering 689–704 (SDGKKEPSDKAVKKDA) has biased composition (basic and acidic residues). The Nuclear localization signal signature appears at 708–716 (SKKKLKKVD). Glycyl lysine isopeptide (Lys-Gly) (interchain with G-Cter in SUMO2) cross-links involve residues Lys717 and Lys734. Thr739 carries the post-translational modification Phosphothreonine. 3 positions are modified to phosphoserine: Ser745, Ser757, and Ser760. Positions 765-778 (DENKEDYTIPDEYR) are enriched in basic and acidic residues. Lys768 participates in a covalent cross-link: Glycyl lysine isopeptide (Lys-Gly) (interchain with G-Cter in SUMO2). The Matrin-type zinc-finger motif lies at 799–830 (FYCKLCSLFYTNEEVAKNTHCSSLPHYQKLKK). An N6-acetyllysine; alternate modification is found at Lys834. Lys834 is covalently cross-linked (Glycyl lysine isopeptide (Lys-Gly) (interchain with G-Cter in SUMO2); alternate).

In terms of assembly, part of a complex consisting of SFPQ, NONO and MATR3. Interacts with AGO1 and AGO2. Part of a complex composed at least of ASH2L, EMSY, HCFC1, HSPA8, CCAR2, MATR3, MKI67, RBBP5, TUBB2A, WDR5 and ZNF335; this complex may have a histone H3-specific methyltransferase activity. Interacts with TARDBP. Part of the HDP-RNP complex composed of at least HEXIM1, PRKDC, XRCC5, XRCC6, paraspeckle proteins (SFPQ, NONO, PSPC1, RBM14, and MATR3) and NEAT1 RNA. Interacts with FUS. Interacts with IGF2BP1. Interacts with IGF2BP2 and IGF2BP3. Interacts with RBPMS.

It localises to the nucleus matrix. Functionally, may play a role in transcription or may interact with other nuclear matrix proteins to form the internal fibrogranular network. In association with the SFPQ-NONO heteromer may play a role in nuclear retention of defective RNAs. Plays a role in the regulation of DNA virus-mediated innate immune response by assembling into the HDP-RNP complex, a complex that serves as a platform for IRF3 phosphorylation and subsequent innate immune response activation through the cGAS-STING pathway. Binds to N6-methyladenosine (m6A)-containing mRNAs and contributes to MYC stability by binding to m6A-containing MYC mRNAs. May bind to specific miRNA hairpins. The polypeptide is Matrin-3 (Matr3) (Rattus norvegicus (Rat)).